The primary structure comprises 779 residues: Endonuclease MutS2 (779 aa).

Position 328–335 (328–335) interacts with ATP; the sequence is GPNTGGKT. The region spanning 704 to 779 is the Smr domain; sequence LDLRGKRYEE…GSGATIVTLG (76 aa).

Belongs to the DNA mismatch repair MutS family. MutS2 subfamily. In terms of assembly, homodimer. Binds to stalled ribosomes, contacting rRNA.

Functionally, endonuclease that is involved in the suppression of homologous recombination and thus may have a key role in the control of bacterial genetic diversity. In terms of biological role, acts as a ribosome collision sensor, splitting the ribosome into its 2 subunits. Detects stalled/collided 70S ribosomes which it binds and splits by an ATP-hydrolysis driven conformational change. Acts upstream of the ribosome quality control system (RQC), a ribosome-associated complex that mediates the extraction of incompletely synthesized nascent chains from stalled ribosomes and their subsequent degradation. Probably generates substrates for RQC. This is Endonuclease MutS2 from Streptococcus agalactiae serotype Ia (strain ATCC 27591 / A909 / CDC SS700).